Here is a 291-residue protein sequence, read N- to C-terminus: MNALFTTAMALRPLDSDPGNPACRVFEGELNEHWTIGPKVHGGAMVALCANAARTAYGAAGQQPMRQPVAVSASFLWAPDPGTMRLVTSIRKRGRRISVADVELTQGGRTAVHAVVTLGEPEHFLPGVDGSGGASGTAPLLSANPVVELMAPEPPEGVVPIGPGHQLAGLVHLGEGCDVRPVLSTLRSATDGRPPVIQLWARPRGVAPDALFALLCGDLSAPVTFAVDRTGWAPTVALTAYLRALPADGWLRVLCTCVEIGQDWFDEDHIVVDRLGRIVVQTRQLAMVPAQ.

In terms of domain architecture, DAGKc spans 68-205 (PVAVSASFLW…VIQLWARPRG (138 aa)).

This is an uncharacterized protein from Mycobacterium tuberculosis (strain CDC 1551 / Oshkosh).